Consider the following 355-residue polypeptide: Probable nitronate monooxygenase (355 aa).

Residues Asn-71, Gln-175, Gly-180, Gly-218, and 237 to 240 (QMGT) contribute to the FMN site.

The protein belongs to the nitronate monooxygenase family. NMO class I subfamily. Requires FMN as cofactor.

It catalyses the reaction 3 propionate 3-nitronate + 3 O2 + H2O = 3 3-oxopropanoate + 2 nitrate + nitrite + H2O2 + 3 H(+). In terms of biological role, nitronate monooxygenase that uses molecular oxygen to catalyze the oxidative denitrification of alkyl nitronates. Acts on propionate 3-nitronate (P3N), the presumed physiological substrate. Probably functions in the detoxification of P3N, a metabolic poison produced by plants and fungi as a defense mechanism. In Staphylococcus aureus (strain MSSA476), this protein is Probable nitronate monooxygenase.